Consider the following 235-residue polypeptide: Large ribosomal subunit protein uL1 (235 aa).

This sequence belongs to the universal ribosomal protein uL1 family. Part of the 50S ribosomal subunit.

Binds directly to 23S rRNA. The L1 stalk is quite mobile in the ribosome, and is involved in E site tRNA release. Its function is as follows. Protein L1 is also a translational repressor protein, it controls the translation of the L11 operon by binding to its mRNA. This chain is Large ribosomal subunit protein uL1, found in Prochlorococcus marinus subsp. pastoris (strain CCMP1986 / NIES-2087 / MED4).